The sequence spans 304 residues: Mitochondrial RNA-splicing protein MRS4 (304 aa).

Solcar repeat units follow at residues 21–108 (APLH…CKAR), 118–200 (HQPM…ASKF), and 207–300 (YNPL…AKHF). Helical transmembrane passes span 23–41 (LHSQLLAGAFAGIMEHSLM), 83–102 (GVQSVILGAGPAHAVYFGTY), 120–139 (PMKTALSGTIATIAADALMN), 175–194 (SYPTTLAMNIPFAAFNFMIY), 209–228 (PLIHCLCGGISGATCAALTT), and 275–288 (GLKPRIVANIPATA).

It belongs to the mitochondrial carrier (TC 2.A.29) family.

It is found in the mitochondrion inner membrane. MRS4 suppresses a mitochondrial splice defect in the first intron of the COB gene. It may act as a carrier, exerting its suppressor activity via modulation of solute concentrations in the mitochondrion (possibly of cations). Not essential. The sequence is that of Mitochondrial RNA-splicing protein MRS4 (MRS4) from Saccharomyces cerevisiae (strain ATCC 204508 / S288c) (Baker's yeast).